A 193-amino-acid polypeptide reads, in one-letter code: Ribonuclease HII (193 aa).

The RNase H type-2 domain maps to 15 to 193 (CIVAGIDEAG…PYHRRSFRCC (179 aa)). A divalent metal cation is bound by residues Asp21, Glu22, and Asp112.

It belongs to the RNase HII family. It depends on Mn(2+) as a cofactor. Mg(2+) is required as a cofactor.

The protein resides in the cytoplasm. It catalyses the reaction Endonucleolytic cleavage to 5'-phosphomonoester.. Endonuclease that specifically degrades the RNA of RNA-DNA hybrids. The sequence is that of Ribonuclease HII from Rickettsia rickettsii (strain Iowa).